Consider the following 151-residue polypeptide: MNSKLVQPSYTAKKEDIKREWFLIDAKDYTLGRLASRIAKILQGKHKPTYTPYIDSGDFVVVVNAEKIKLSKDKKENKIYRRYSGYPGGLKEISFEQMQSKHPERIIQLAVKGMMPKTILAKHMMKKLKVYVGPDHPHQAQNPKEIKIENI.

The protein belongs to the universal ribosomal protein uL13 family. Part of the 50S ribosomal subunit.

Its function is as follows. This protein is one of the early assembly proteins of the 50S ribosomal subunit, although it is not seen to bind rRNA by itself. It is important during the early stages of 50S assembly. This is Large ribosomal subunit protein uL13 from Petrotoga mobilis (strain DSM 10674 / SJ95).